The primary structure comprises 159 residues: Ribosomal RNA large subunit methyltransferase H (159 aa).

S-adenosyl-L-methionine is bound by residues isoleucine 75, glycine 108, and phenylalanine 127 to leucine 132.

Belongs to the RNA methyltransferase RlmH family. In terms of assembly, homodimer.

The protein localises to the cytoplasm. It catalyses the reaction pseudouridine(1915) in 23S rRNA + S-adenosyl-L-methionine = N(3)-methylpseudouridine(1915) in 23S rRNA + S-adenosyl-L-homocysteine + H(+). Specifically methylates the pseudouridine at position 1915 (m3Psi1915) in 23S rRNA. The protein is Ribosomal RNA large subunit methyltransferase H of Lactococcus lactis subsp. lactis (strain IL1403) (Streptococcus lactis).